The chain runs to 360 residues: DNA replication and repair protein RecF (360 aa).

An ATP-binding site is contributed by 30–37; sequence GHNGSGKT.

Belongs to the RecF family.

Its subcellular location is the cytoplasm. Functionally, the RecF protein is involved in DNA metabolism; it is required for DNA replication and normal SOS inducibility. RecF binds preferentially to single-stranded, linear DNA. It also seems to bind ATP. The sequence is that of DNA replication and repair protein RecF from Haemophilus ducreyi (strain 35000HP / ATCC 700724).